The sequence spans 250 residues: tRNA (guanine-N(1)-)-methyltransferase (250 aa).

Residues glycine 116 and 136 to 141 (IGDYVL) each bind S-adenosyl-L-methionine.

The protein belongs to the RNA methyltransferase TrmD family. In terms of assembly, homodimer.

The protein resides in the cytoplasm. It carries out the reaction guanosine(37) in tRNA + S-adenosyl-L-methionine = N(1)-methylguanosine(37) in tRNA + S-adenosyl-L-homocysteine + H(+). Its function is as follows. Specifically methylates guanosine-37 in various tRNAs. In Pseudomonas fluorescens (strain SBW25), this protein is tRNA (guanine-N(1)-)-methyltransferase.